The following is a 335-amino-acid chain: PA-phosphatase related-family protein DDB_G0275547 (335 aa).

Helical transmembrane passes span 43–63 (VMYL…GILF), 93–113 (VLIP…SLIV), 124–144 (ILGL…FKCF), 202–222 (SITA…FKIF), 226–246 (GHIF…LIGI), and 254–274 (HTFL…LSCY).

Belongs to the PA-phosphatase related phosphoesterase family.

It localises to the membrane. This Dictyostelium discoideum (Social amoeba) protein is PA-phosphatase related-family protein DDB_G0275547.